Reading from the N-terminus, the 111-residue chain is Type III endosome membrane protein TEMP (111 aa).

At 1–27 (MIGGNTTIISGAINASTEAPGLGTGGR) the chain is on the extracellular side. The N-linked (GlcNAc...) asparagine glycan is linked to Asn5. The helical; Signal-anchor for type III membrane protein transmembrane segment at 28–48 (AWPVLVGVVLGAVVLSILIAL) threads the bilayer. Residues 49-111 (AAKCHLCRRY…TTGSRDHFSL (63 aa)) lie on the Cytoplasmic side of the membrane. Residues 64-111 (HRPLSSAGGGNRPPVGEDEDDDGFIEDNYIQPGAGEMETTGSRDHFSL) are disordered. The segment covering 79–88 (GEDEDDDGFI) has biased composition (acidic residues).

As to expression, expressed in stomach, kidney, large and small intestine and kidney.

It is found in the membrane. The protein resides in the early endosome. Its subcellular location is the recycling endosome. The protein localises to the cell membrane. Its function is as follows. May be involved in membrane trafficking between endosomes and plasma membrane. The protein is Type III endosome membrane protein TEMP of Mus musculus (Mouse).